The primary structure comprises 86 residues: Large ribosomal subunit protein bL31B (86 aa).

This sequence belongs to the bacterial ribosomal protein bL31 family. Type B subfamily. In terms of assembly, part of the 50S ribosomal subunit.

The sequence is that of Large ribosomal subunit protein bL31B from Erwinia tasmaniensis (strain DSM 17950 / CFBP 7177 / CIP 109463 / NCPPB 4357 / Et1/99).